Consider the following 247-residue polypeptide: MTRRVKTGIPGVDEILHGGIPERNVVLLSGGPGTGKTIFSQQFLWNGLKMGEPGIYVALEEHPVQVRQNMAQFGWDVKPYEEKGMFAMVDAFTAGIGKSKEYEKYIVHDLTDIREFIEVLRQAIRDINAKRVVVDSVTTLYINKPAMARSIILQLKRVLAGTGCTSIFVSQVSVGERGFGGPGVEHGVDGIIRLDLDEIDGELKRSLIVWKMRGTSHSMRRHPFDITDKGIIVYPDKVLKRGKVLEL.

Residues 3–247 (RRVKTGIPGV…VLKRGKVLEL (245 aa)) enclose the KaiC domain. 30–37 (GGPGTGKT) contributes to the ATP binding site.

The protein belongs to the UPF0273 family.

In Pyrococcus horikoshii (strain ATCC 700860 / DSM 12428 / JCM 9974 / NBRC 100139 / OT-3), this protein is UPF0273 protein PH0284.